The primary structure comprises 275 residues: Nitrogenase iron protein 1 (275 aa).

9–16 (GKGGIGKS) provides a ligand contact to ATP. Residue C97 participates in [4Fe-4S] cluster binding. At R100 the chain carries ADP-ribosylarginine; by dinitrogenase reductase ADP-ribosyltransferase. C132 contributes to the [4Fe-4S] cluster binding site.

Belongs to the NifH/BchL/ChlL family. Homodimer. The cofactor is [4Fe-4S] cluster. In terms of processing, the reversible ADP-ribosylation of Arg-100 inactivates the nitrogenase reductase and regulates nitrogenase activity.

The enzyme catalyses N2 + 8 reduced [2Fe-2S]-[ferredoxin] + 16 ATP + 16 H2O = H2 + 8 oxidized [2Fe-2S]-[ferredoxin] + 2 NH4(+) + 16 ADP + 16 phosphate + 6 H(+). Its function is as follows. The key enzymatic reactions in nitrogen fixation are catalyzed by the nitrogenase complex, which has 2 components: the iron protein and the molybdenum-iron protein. This chain is Nitrogenase iron protein 1 (nifH1), found in Methanothermobacter thermautotrophicus (strain ATCC 29096 / DSM 1053 / JCM 10044 / NBRC 100330 / Delta H) (Methanobacterium thermoautotrophicum).